Here is a 180-residue protein sequence, read N- to C-terminus: Threonylcarbamoyl-AMP synthase (180 aa).

A YrdC-like domain is found at 1-180 (MRARALQHFL…DLITGAIVRP (180 aa)).

Belongs to the SUA5 family. TsaC subfamily.

It localises to the cytoplasm. It catalyses the reaction L-threonine + hydrogencarbonate + ATP = L-threonylcarbamoyladenylate + diphosphate + H2O. Functionally, required for the formation of a threonylcarbamoyl group on adenosine at position 37 (t(6)A37) in tRNAs that read codons beginning with adenine. Catalyzes the conversion of L-threonine, HCO(3)(-)/CO(2) and ATP to give threonylcarbamoyl-AMP (TC-AMP) as the acyladenylate intermediate, with the release of diphosphate. This is Threonylcarbamoyl-AMP synthase from Methylobacillus flagellatus (strain ATCC 51484 / DSM 6875 / VKM B-1610 / KT).